We begin with the raw amino-acid sequence, 822 residues long: Pentatricopeptide repeat-containing protein At2g41720 (822 aa).

Positions 1-28 (MATVTNFKLVTPPESSRADKPGATKASD) are disordered. PPR repeat units lie at residues 106–136 (ARKN…MKIQ), 142–176 (RNDI…SCKP), 177–211 (DAET…AIAP), 212–246 (SRST…GVGP), 247–281 (DLVT…KVRP), 282–316 (DTTT…RAEC), 319–353 (DVVT…GLKP), 354–388 (NIVS…GIIP), 389–423 (DVVS…RRKP), 424–458 (NVVT…GIKP), 459–493 (NVVS…GINL), 494–528 (NTAA…KVKA), 529–563 (DSVT…SIPL), 564–598 (TKEV…GCEP), 599–633 (DVIA…GIEP), 634–668 (DSIA…EIPF), 669–699 (TGAV…MDPY), 704–738 (SIGL…GVGI), and 739–773 (NLKT…GIQP).

This sequence belongs to the PPR family. P subfamily.

In Arabidopsis thaliana (Mouse-ear cress), this protein is Pentatricopeptide repeat-containing protein At2g41720 (EMB2654).